The following is a 77-amino-acid chain: Omega-conotoxin TxVII (77 aa).

The first 22 residues, 1-22 (MKLTCMMIVAVLFLTAWTFATA), serve as a signal peptide directing secretion. Positions 23–49 (DDSGNGLENLFPKAHHEMKNPEASKLN) are excised as a propeptide. Cystine bridges form between Cys52–Cys67, Cys59–Cys71, and Cys66–Cys75.

As to expression, expressed by the venom duct.

The protein localises to the secreted. Its function is as follows. Omega-conotoxins act at presynaptic membranes, they bind and block voltage-gated calcium channels (Cav). Specifically acts on L-type channels. It blocks molluscan dihydropyridine-sensitive calcium channels. The chain is Omega-conotoxin TxVII from Conus textile (Cloth-of-gold cone).